The primary structure comprises 306 residues: Acetaldehyde dehydrogenase 2/3 (306 aa).

Residue Cys-130 is the Acyl-thioester intermediate of the active site. NAD(+)-binding positions include Ser-161 to Asn-169 and Asn-272.

It belongs to the acetaldehyde dehydrogenase family.

It catalyses the reaction acetaldehyde + NAD(+) + CoA = acetyl-CoA + NADH + H(+). This Azoarcus sp. (strain BH72) protein is Acetaldehyde dehydrogenase 2/3 (mhpF).